Here is a 580-residue protein sequence, read N- to C-terminus: Nuclear body protein SP140-like protein (580 aa).

The HSR domain occupies 33–149; the sequence is SLQRLFTEDQ…IYKSFKNAIQ (117 aa). The interval 155–293 is disordered; it reads QESDRKEREE…RSRASRKHKD (139 aa). Over residues 156-170 the composition is skewed to basic and acidic residues; it reads ESDRKEREERPDIKL. Lysine 169 is covalently cross-linked (Glycyl lysine isopeptide (Lys-Gly) (interchain with G-Cter in SUMO2)). A Phosphoserine modification is found at serine 180. Positions 207 to 219 are enriched in basic residues; it reads KPKRKRRKKKGHG. The span at 224 to 236 shows a compositional bias: polar residues; the sequence is GTRTQKNNQQNDN. Positions 280–290 are enriched in basic residues; sequence QKRVRSRASRK. Lysine 292 participates in a covalent cross-link: Glycyl lysine isopeptide (Lys-Gly) (interchain with G-Cter in SUMO2). The region spanning 293–374 is the SAND domain; that stretch reads DETVDFQAPL…RRLMEEGSLP (82 aa). The PHD-type zinc finger occupies 403–449; sequence LDECEVCRDGGELFCCDTCSRVFHEDCHIPPVESEKTPWNCIFCRMK. In terms of domain architecture, Bromo spans 467 to 570; that stretch reads QMCPEEQLKC…AEFEKDFKEV (104 aa).

The polypeptide is Nuclear body protein SP140-like protein (SP140L) (Homo sapiens (Human)).